Consider the following 480-residue polypeptide: UDP-glycosyltransferase 72B2 (480 aa).

Residues serine 277, 347 to 349 (APQ), 364 to 372 (HCGWNSTLE), and 386 to 389 (FAEQ) contribute to the UDP-alpha-D-glucose site.

Belongs to the UDP-glycosyltransferase family.

This Arabidopsis thaliana (Mouse-ear cress) protein is UDP-glycosyltransferase 72B2 (UGT72B2).